The sequence spans 1613 residues: Myosin-IIIa (1613 aa).

One can recognise a Protein kinase domain in the interval 21–287 (WEIIETIGKG…VSDLLKHKFI (267 aa)). Residues 27–35 (IGKGTYGKV) and Lys-50 each bind ATP. The active-site Proton acceptor is the Asp-150. The region spanning 338-1052 (KDVDDLATLD…HVEQLNLMRK (715 aa)) is the Myosin motor domain. Residues 933–955 (LMDLLSKMVVGQPHFVRCIKPNN) form an actin-binding region. 2 consecutive IQ domains span residues 1054 to 1083 (ATNK…KRKS) and 1081 to 1110 (RKSS…MKNT). Disordered stretches follow at residues 1136–1168 (VKKQ…TAPF) and 1476–1506 (SGVS…EDST). Low complexity predominate over residues 1145-1161 (PTNESNTSTPNNKESPS). The tract at residues 1398-1476 (EGVHHSKMVD…RHVSTHQYLS (79 aa)) is interaction with MORN4. Positions 1488–1497 (RPPRRPRKPK) are enriched in basic residues.

This sequence in the C-terminal section; belongs to the TRAFAC class myosin-kinesin ATPase superfamily. Myosin family. The protein in the N-terminal section; belongs to the protein kinase superfamily. STE Ser/Thr protein kinase family. As to quaternary structure, interacts with MORN4. Interacts (via C-terminus) with ESPN and ESPNL. As to expression, expressed in the cochlear hair cells (at protein level). Expressed in utricle hair bundles (at protein level).

Its subcellular location is the cytoplasm. It is found in the cytoskeleton. It localises to the cell projection. The protein localises to the filopodium tip. The protein resides in the stereocilium. It carries out the reaction L-seryl-[protein] + ATP = O-phospho-L-seryl-[protein] + ADP + H(+). The enzyme catalyses L-threonyl-[protein] + ATP = O-phospho-L-threonyl-[protein] + ADP + H(+). It catalyses the reaction ATP + H2O = ADP + phosphate + H(+). Actin-dependent motor protein with a protein kinase activity, playing an essential role in hearing. Probably plays also a role in vision. Required for normal cochlear hair bundle development and hearing. Plays an important role in the early steps of cochlear hair bundle morphogenesis. Influences the number and lengths of stereocilia to be produced and limits the growth of microvilli within the forming auditory hair bundles thereby contributing to the architecture of the hair bundle, including its staircase pattern. Involved in the elongation of actin in stereocilia tips by transporting the actin regulatory factor ESPN to the plus ends of actin filaments. The sequence is that of Myosin-IIIa (Myo3a) from Mus musculus (Mouse).